The sequence spans 132 residues: ATP synthase epsilon chain, chloroplastic (132 aa).

It belongs to the ATPase epsilon chain family. F-type ATPases have 2 components, CF(1) - the catalytic core - and CF(0) - the membrane proton channel. CF(1) has five subunits: alpha(3), beta(3), gamma(1), delta(1), epsilon(1). CF(0) has three main subunits: a, b and c.

The protein resides in the plastid. Its subcellular location is the chloroplast thylakoid membrane. Produces ATP from ADP in the presence of a proton gradient across the membrane. This is ATP synthase epsilon chain, chloroplastic from Coffea arabica (Arabian coffee).